A 250-amino-acid chain; its full sequence is Triosephosphate isomerase (250 aa).

Substrate is bound at residue 9-11; sequence NWK. Catalysis depends on H94, which acts as the Electrophile. E166 serves as the catalytic Proton acceptor. Substrate contacts are provided by residues G172, S212, and 233 to 234; that span reads GG.

It belongs to the triosephosphate isomerase family. As to quaternary structure, homodimer.

Its subcellular location is the cytoplasm. The enzyme catalyses D-glyceraldehyde 3-phosphate = dihydroxyacetone phosphate. Its pathway is carbohydrate biosynthesis; gluconeogenesis. It participates in carbohydrate degradation; glycolysis; D-glyceraldehyde 3-phosphate from glycerone phosphate: step 1/1. Functionally, involved in the gluconeogenesis. Catalyzes stereospecifically the conversion of dihydroxyacetone phosphate (DHAP) to D-glyceraldehyde-3-phosphate (G3P). The protein is Triosephosphate isomerase of Clostridium novyi (strain NT).